The primary structure comprises 327 residues: Chain length determinant protein (327 aa).

The Cytoplasmic segment spans residues 1-31 (MTVDSNTSSGRGNDPEQIDLIELLLQLWRGK). Residues 32–52 (MTIIVAVIIAILLAVGYLMIA) traverse the membrane as a helical segment. Over 53 to 294 (KEKWTSTAII…LPVRRDSPKT (242 aa)) the chain is Periplasmic. A helical membrane pass occupies residues 295–315 (AITLVLAVLLGGMIGAGIVLG). Topologically, residues 316 to 327 (RNALRSYKPKAL) are cytoplasmic.

This sequence belongs to the WzzB/Cld/Rol family.

The protein resides in the cell inner membrane. It functions in the pathway bacterial outer membrane biogenesis; lipopolysaccharide biosynthesis. In terms of biological role, confers a modal distribution of chain length on the O-antigen component of lipopolysaccharide (LPS). Gives rise to a reduced number of short chain molecules and increases in numbers of longer molecules, with a modal value of 20. This is Chain length determinant protein (wzzB) from Salmonella typhimurium (strain LT2 / SGSC1412 / ATCC 700720).